Consider the following 472-residue polypeptide: Chromosomal replication initiator protein DnaA (472 aa).

Residues 1–73 (MSNMEQDRWS…LSCWQAELPE (73 aa)) form a domain I, interacts with DnaA modulators region. Residues 73–128 (EVNRVDLTVRSPVRCAAPAKEAPAPVESRRDEQRPSAERSNGATPVSANHDALGGS) form a domain II region. Positions 89–124 (APAKEAPAPVESRRDEQRPSAERSNGATPVSANHDA) are disordered. Residues 99 to 109 (ESRRDEQRPSA) are compositionally biased toward basic and acidic residues. The span at 110-119 (ERSNGATPVS) shows a compositional bias: polar residues. Residues 129–351 (PLDPRLTFAS…GAINRLLAHS (223 aa)) form a domain III, AAA+ region region. Residues Gly176, Gly178, Lys179, and Thr180 each coordinate ATP. Positions 352–472 (KLNNQPVTLE…VESLKRQLQE (121 aa)) are domain IV, binds dsDNA.

The protein belongs to the DnaA family. Oligomerizes as a right-handed, spiral filament on DNA at oriC.

The protein localises to the cytoplasm. Its function is as follows. Plays an essential role in the initiation and regulation of chromosomal replication. ATP-DnaA binds to the origin of replication (oriC) to initiate formation of the DNA replication initiation complex once per cell cycle. Binds the DnaA box (a 9 base pair repeat at the origin) and separates the double-stranded (ds)DNA. Forms a right-handed helical filament on oriC DNA; dsDNA binds to the exterior of the filament while single-stranded (ss)DNA is stabiized in the filament's interior. The ATP-DnaA-oriC complex binds and stabilizes one strand of the AT-rich DNA unwinding element (DUE), permitting loading of DNA polymerase. After initiation quickly degrades to an ADP-DnaA complex that is not apt for DNA replication. Binds acidic phospholipids. The protein is Chromosomal replication initiator protein DnaA of Rhodopseudomonas palustris (strain TIE-1).